Reading from the N-terminus, the 408-residue chain is Peptidase T (408 aa).

Zn(2+) is bound at residue H78. Residue D80 is part of the active site. D140 provides a ligand contact to Zn(2+). The active-site Proton acceptor is the E173. Zn(2+) contacts are provided by E174, D196, and H379.

Belongs to the peptidase M20B family. Zn(2+) serves as cofactor.

The protein resides in the cytoplasm. It carries out the reaction Release of the N-terminal residue from a tripeptide.. In terms of biological role, cleaves the N-terminal amino acid of tripeptides. The polypeptide is Peptidase T (Escherichia coli O9:H4 (strain HS)).